We begin with the raw amino-acid sequence, 167 residues long: Transmembrane protein 229B (167 aa).

The Cytoplasmic portion of the chain corresponds to 1–14; that stretch reads MAAAEPLTAFSRWY. A helical membrane pass occupies residues 15 to 35; the sequence is LYAIHGYFCEVMFTAAWEFVV. The Extracellular segment spans residues 36 to 40; it reads NFNWK. The helical transmembrane segment at 41-61 threads the bilayer; that stretch reads FPGVTSVWALFIYGTSILIVE. Residues 62–72 are Cytoplasmic-facing; the sequence is KMYLYLKDKCH. The chain crosses the membrane as a helical span at residues 73–93; sequence ILVRCFIYTLWTYLWEFTTGL. The Extracellular portion of the chain corresponds to 94–109; that stretch reads ILRQFNACPWDYSQFD. The chain crosses the membrane as a helical span at residues 110 to 130; it reads FDFMGLITLEYAIPWFCASFI. The Cytoplasmic segment spans residues 131-167; it reads MEQLVIRNTLRLRFDETAEPGAPTVPVALANGHVKTD.

This sequence belongs to the TMEM229 family.

Its subcellular location is the membrane. This chain is Transmembrane protein 229B (TMEM229B), found in Gallus gallus (Chicken).